The sequence spans 397 residues: 1-deoxy-D-xylulose 5-phosphate reductoisomerase (397 aa).

Threonine 12, glycine 13, serine 14, isoleucine 15, glycine 38, lysine 39, asparagine 40, and asparagine 126 together coordinate NADPH. A 1-deoxy-D-xylulose 5-phosphate-binding site is contributed by lysine 127. Glutamate 128 serves as a coordination point for NADPH. Residue aspartate 152 coordinates Mn(2+). Residues serine 153, glutamate 154, serine 188, and histidine 211 each contribute to the 1-deoxy-D-xylulose 5-phosphate site. Residue glutamate 154 participates in Mn(2+) binding. Glycine 217 contributes to the NADPH binding site. 4 residues coordinate 1-deoxy-D-xylulose 5-phosphate: serine 224, asparagine 229, lysine 230, and glutamate 233. Glutamate 233 is a Mn(2+) binding site.

Belongs to the DXR family. Mg(2+) serves as cofactor. Mn(2+) is required as a cofactor.

It catalyses the reaction 2-C-methyl-D-erythritol 4-phosphate + NADP(+) = 1-deoxy-D-xylulose 5-phosphate + NADPH + H(+). It functions in the pathway isoprenoid biosynthesis; isopentenyl diphosphate biosynthesis via DXP pathway; isopentenyl diphosphate from 1-deoxy-D-xylulose 5-phosphate: step 1/6. In terms of biological role, catalyzes the NADPH-dependent rearrangement and reduction of 1-deoxy-D-xylulose-5-phosphate (DXP) to 2-C-methyl-D-erythritol 4-phosphate (MEP). In Haemophilus influenzae (strain PittEE), this protein is 1-deoxy-D-xylulose 5-phosphate reductoisomerase.